Reading from the N-terminus, the 187-residue chain is MATTADFKNGLVLVIDGQLWTITEFQHVKPGKGPAFVRTKLKNVLSGKVVDKTFNAGVKVDTATVDRRDTTYLYRDGSDFVFMDSQDYEQHPLPEALVGDAARFLLEGMPVQVAFHNGVPLYIELPVTVELEVTHTEPGLQGDRSSAGTKPATLQTGAQINVPLFINTGDKLKVDSRDGSYLGRVNA.

The protein belongs to the elongation factor P family.

It is found in the cytoplasm. The protein operates within protein biosynthesis; polypeptide chain elongation. Functionally, involved in peptide bond synthesis. Stimulates efficient translation and peptide-bond synthesis on native or reconstituted 70S ribosomes in vitro. Probably functions indirectly by altering the affinity of the ribosome for aminoacyl-tRNA, thus increasing their reactivity as acceptors for peptidyl transferase. This Mycobacterium bovis (strain ATCC BAA-935 / AF2122/97) protein is Elongation factor P (efp).